Consider the following 495-residue polypeptide: Chromosomal replication initiator protein DnaA (495 aa).

Positions 1–83 are domain I, interacts with DnaA modulators; it reads MSVALWQQCL…KVQLTVGSRR (83 aa). The tract at residues 83-158 is domain II; sequence RNVAMSSPRD…QVEGSLKHQS (76 aa). Residues 86–127 are disordered; sequence AMSSPRDLGAPVSATTMNASRPTEAPAVHAAPRAKGDYADEQ. Residues 159-375 are domain III, AAA+ region; it reads GLNPNFTFET…GALKKVIADS (217 aa). ATP-binding residues include G203, G205, K206, and T207. A domain IV, binds dsDNA region spans residues 376–495; it reads HFMGKPITQD…YKNLLRLLTS (120 aa).

This sequence belongs to the DnaA family. In terms of assembly, oligomerizes as a right-handed, spiral filament on DNA at oriC.

The protein resides in the cytoplasm. Its function is as follows. Plays an essential role in the initiation and regulation of chromosomal replication. ATP-DnaA binds to the origin of replication (oriC) to initiate formation of the DNA replication initiation complex once per cell cycle. Binds the DnaA box (a 9 base pair repeat at the origin) and separates the double-stranded (ds)DNA. Forms a right-handed helical filament on oriC DNA; dsDNA binds to the exterior of the filament while single-stranded (ss)DNA is stabiized in the filament's interior. The ATP-DnaA-oriC complex binds and stabilizes one strand of the AT-rich DNA unwinding element (DUE), permitting loading of DNA polymerase. After initiation quickly degrades to an ADP-DnaA complex that is not apt for DNA replication. Binds acidic phospholipids. This chain is Chromosomal replication initiator protein DnaA, found in Chromohalobacter salexigens (strain ATCC BAA-138 / DSM 3043 / CIP 106854 / NCIMB 13768 / 1H11).